A 431-amino-acid chain; its full sequence is Glutamate-1-semialdehyde 2,1-aminomutase 2 (431 aa).

The residue at position 268 (Lys-268) is an N6-(pyridoxal phosphate)lysine.

Belongs to the class-III pyridoxal-phosphate-dependent aminotransferase family. HemL subfamily. As to quaternary structure, homodimer. Pyridoxal 5'-phosphate serves as cofactor.

It is found in the cytoplasm. The catalysed reaction is (S)-4-amino-5-oxopentanoate = 5-aminolevulinate. It participates in porphyrin-containing compound metabolism; protoporphyrin-IX biosynthesis; 5-aminolevulinate from L-glutamyl-tRNA(Glu): step 2/2. This chain is Glutamate-1-semialdehyde 2,1-aminomutase 2, found in Anoxybacillus flavithermus (strain DSM 21510 / WK1).